The following is a 379-amino-acid chain: Cytochrome b (379 aa).

Helical transmembrane passes span 33-53, 77-98, 113-133, 178-198, 226-246, 288-308, 320-340, and 347-367; these read FGSL…FLAM, WLIR…FLHV, WNIG…GYVL, FFAF…VHLL, IKDV…VLFS, LGGV…PILH, LSQC…WIGG, and FITI…LALP. Residues His83 and His97 each coordinate heme b. Heme b is bound by residues His182 and His196.

The protein belongs to the cytochrome b family. In terms of assembly, the cytochrome bc1 complex contains 11 subunits: 3 respiratory subunits (MT-CYB, CYC1 and UQCRFS1), 2 core proteins (UQCRC1 and UQCRC2) and 6 low-molecular weight proteins (UQCRH/QCR6, UQCRB/QCR7, UQCRQ/QCR8, UQCR10/QCR9, UQCR11/QCR10 and a cleavage product of UQCRFS1). This cytochrome bc1 complex then forms a dimer. Requires heme b as cofactor.

The protein localises to the mitochondrion inner membrane. Functionally, component of the ubiquinol-cytochrome c reductase complex (complex III or cytochrome b-c1 complex) that is part of the mitochondrial respiratory chain. The b-c1 complex mediates electron transfer from ubiquinol to cytochrome c. Contributes to the generation of a proton gradient across the mitochondrial membrane that is then used for ATP synthesis. This chain is Cytochrome b (MT-CYB), found in Sciurus niger (Eastern fox squirrel).